Here is a 375-residue protein sequence, read N- to C-terminus: DNA replication and repair protein RecF (375 aa).

30-37 is an ATP binding site; sequence GDNAQGKT.

It belongs to the RecF family.

The protein resides in the cytoplasm. Its function is as follows. The RecF protein is involved in DNA metabolism; it is required for DNA replication and normal SOS inducibility. RecF binds preferentially to single-stranded, linear DNA. It also seems to bind ATP. The protein is DNA replication and repair protein RecF of Symbiobacterium thermophilum (strain DSM 24528 / JCM 14929 / IAM 14863 / T).